Here is a 227-residue protein sequence, read N- to C-terminus: Translation initiation factor 6 (227 aa).

This sequence belongs to the eIF-6 family.

Its function is as follows. Binds to the 50S ribosomal subunit and prevents its association with the 30S ribosomal subunit to form the 70S initiation complex. This chain is Translation initiation factor 6, found in Methanococcus aeolicus (strain ATCC BAA-1280 / DSM 17508 / OCM 812 / Nankai-3).